A 326-amino-acid polypeptide reads, in one-letter code: MIEKSQACHDSLLDSVGQTPMVQLHQLFPKHEVFAKLEYMNPGGSMKDRPAKYIIEHGIKHGLITENTHLIESTSGNLGIALAMIAKIKGLKLTCVVDPKISPTNLKIIKSYGANVEMVEEPDAHGGYLMTRIAKVQELLATIDDAYWINQYANELNWQSHYHGAGTEIVETIKQPIDYFVAPVSTTGSIMGMSRKIKEGHPNAQIVAVDAKGSVIFGDKPINRELPGIGASRVPEILNRSEINQVIHVDDYQSALGCRKLIDYEGIFAGGSTGSIIAAIEQLITSIEEGATIVTILPDRGDRYLDLVYSDTWLEKMKSRQGVKSE.

Lys47 bears the N6-(pyridoxal phosphate)lysine mark. Pyridoxal 5'-phosphate is bound by residues Asn77, 185 to 189 (STTGS), and Ser272.

Belongs to the cysteine synthase/cystathionine beta-synthase family. SbnA subfamily. In terms of assembly, homodimer. Requires pyridoxal 5'-phosphate as cofactor.

The catalysed reaction is O-phospho-L-serine + L-glutamate = N-[(2S)-2-amino-2-carboxyethyl]-L-glutamate + phosphate + H(+). It participates in siderophore biosynthesis. Its function is as follows. Catalyzes the synthesis of N-((2S)-2-amino-2-carboxyethyl)-L-glutamate (ACEGA) from O-phospho-L-serine and L-glutamate. Involved in the biosynthesis of L-2,3-diaminopropionic acid (L-Dap), a precursor of staphyloferrin B and antibiotics. This is N-(2-amino-2-carboxyethyl)-L-glutamate synthase (sbnA) from Staphylococcus aureus (strain N315).